The primary structure comprises 105 residues: Phosphoribosyl-AMP cyclohydrolase (105 aa).

A Mg(2+)-binding site is contributed by Asp-72. Cys-73 lines the Zn(2+) pocket. Residues Asp-74 and Asp-76 each contribute to the Mg(2+) site. Residues Cys-89 and Cys-96 each contribute to the Zn(2+) site.

This sequence belongs to the PRA-CH family. As to quaternary structure, homodimer. Requires Mg(2+) as cofactor. Zn(2+) serves as cofactor.

The protein resides in the cytoplasm. It carries out the reaction 1-(5-phospho-beta-D-ribosyl)-5'-AMP + H2O = 1-(5-phospho-beta-D-ribosyl)-5-[(5-phospho-beta-D-ribosylamino)methylideneamino]imidazole-4-carboxamide. Its pathway is amino-acid biosynthesis; L-histidine biosynthesis; L-histidine from 5-phospho-alpha-D-ribose 1-diphosphate: step 3/9. Its function is as follows. Catalyzes the hydrolysis of the adenine ring of phosphoribosyl-AMP. The chain is Phosphoribosyl-AMP cyclohydrolase from Listeria innocua serovar 6a (strain ATCC BAA-680 / CLIP 11262).